A 212-amino-acid chain; its full sequence is Large ribosomal subunit protein bL25 (212 aa).

The tract at residues 179–212 (EPEEEELPEDDEAAAEGEDAAAGEEAEAPAESED) is disordered.

Belongs to the bacterial ribosomal protein bL25 family. CTC subfamily. As to quaternary structure, part of the 50S ribosomal subunit; part of the 5S rRNA/L5/L18/L25 subcomplex. Contacts the 5S rRNA. Binds to the 5S rRNA independently of L5 and L18.

In terms of biological role, this is one of the proteins that binds to the 5S RNA in the ribosome where it forms part of the central protuberance. In Corynebacterium urealyticum (strain ATCC 43042 / DSM 7109), this protein is Large ribosomal subunit protein bL25.